Reading from the N-terminus, the 74-residue chain is Mucroporin (74 aa).

The N-terminal stretch at 1-22 is a signal peptide; that stretch reads MKVKFLLAVFLIVLVVTDHCHA. K39 is subject to Lysine amide. Positions 45 to 74 are excised as a propeptide; the sequence is QMEARFEPQNRNYRKRELDLEKLFANMPDY.

This sequence belongs to the non-disulfide-bridged peptide (NDBP) superfamily. Short antimicrobial peptide (group 4) family. As to expression, expressed by the venom gland.

It is found in the secreted. Its subcellular location is the target cell membrane. Its function is as follows. Mucroporin: cationic host defense peptide that have antibacterial activity by breaking membranes. Is more effective on Gram-positive than on Gram-negative bacteria. Minimum inhibitory concentrations (MIC) are the following: MIC=&gt;100 ug/ml against E.coli AB94012, MIC=&gt;100 ug/ml against P.aeruginosa AB93066, MIC=25 ug/ml against B.thuringiensis AB92037, MIC=50 ug/ml against B.subtilis AB91021, MIC=25 ug/ml against S.aureus AB94004, and MIC=25 ug/ml against the methicillin-resistant coagulase-negative Staphylococcus. Its synthetic analog mucroporin-M1 is more effective. Does not show antiviral activity against any of measles, SARS-CoV, influenza H5N1, hepatitis B and HIV-1 viruses. In terms of biological role, mutant mucroporin-M1: can inhibit Gram-positive bacteria at low concentrations and antibiotic-resistant pathogens. Minimum inhibitory concentrations (MIC) are the following: MIC=12.5 ug/ml against E.coli AB94012, MIC=100 ug/ml against P.aeruginosa AB93066, MIC=25 ug/ml against B.thuringiensis AB92037, MIC=25 ug/ml against B.subtilis AB91021, MIC=5 ug/ml against S.aureus AB94004, and MIC=5 ug/ml against the methicillin-resistant coagulase-negative Staphylococcus. Also shows antiviral activities against measles (EC(50) of 7.15 ug/ml), SARS-CoV (EC(50) of 14.46 ug/ml), influenza H5N1 viruses (EC(50) of 2.10 mug/ml), HIV-1, and hepatitis B virus. In Lychas mucronatus (Chinese swimming scorpion), this protein is Mucroporin.